The following is a 152-amino-acid chain: Large ribosomal subunit protein bL9 (152 aa).

This sequence belongs to the bacterial ribosomal protein bL9 family.

Its function is as follows. Binds to the 23S rRNA. The protein is Large ribosomal subunit protein bL9 of Streptococcus thermophilus (strain ATCC BAA-491 / LMD-9).